Here is a 337-residue protein sequence, read N- to C-terminus: LIX1-like protein (337 aa).

The interval 1–64 is disordered; that stretch reads METMRAQRLQ…PLLLSGAPGL (64 aa). A compositionally biased stretch (low complexity) spans 26 to 38; sequence PGVTGAAAATATP. The span at 39–56 shows a compositional bias: pro residues; sequence PAGPPPAPPPPAPPPPPL.

Belongs to the LIX1 family.

The chain is LIX1-like protein (LIX1L) from Homo sapiens (Human).